Consider the following 85-residue polypeptide: Small ribosomal subunit protein uS17 (85 aa).

This sequence belongs to the universal ribosomal protein uS17 family. Part of the 30S ribosomal subunit.

In terms of biological role, one of the primary rRNA binding proteins, it binds specifically to the 5'-end of 16S ribosomal RNA. The sequence is that of Small ribosomal subunit protein uS17 from Lachnoclostridium phytofermentans (strain ATCC 700394 / DSM 18823 / ISDg) (Clostridium phytofermentans).